A 288-amino-acid chain; its full sequence is NAD(P)H-hydrate epimerase (288 aa).

The transit peptide at 1–47 (MSRLRALLGLGLLVAGSRVPRIKSQTIACRSGPTWWGPQRLNSGGRW) directs the protein to the mitochondrion. At serine 49 the chain carries Phosphoserine. A YjeF N-terminal domain is found at 65–275 (AQAVDQELFN…ALEKKYQLNL (211 aa)). 119 to 123 (NNGGD) provides a ligand contact to (6S)-NADPHX. K(+) is bound at residue asparagine 120. Position 144 is an N6-succinyllysine (lysine 144). Aspartate 185 provides a ligand contact to K(+). Residues 189 to 195 (GFSFKGD) and aspartate 218 contribute to the (6S)-NADPHX site. A K(+)-binding site is contributed by serine 221.

This sequence belongs to the NnrE/AIBP family. Homodimer. Interacts with APOA1 and APOA2. K(+) is required as a cofactor. Undergoes physiological phosphorylation during sperm capacitation, downstream to PKA activation. As to expression, ubiquitously expressed, with highest levels in kidney, heart and liver. Present in cerebrospinal fluid and urine but not in serum from healthy patients. Present in serum of sepsis patients (at protein level).

Its subcellular location is the mitochondrion. The protein localises to the secreted. It carries out the reaction (6R)-NADHX = (6S)-NADHX. It catalyses the reaction (6R)-NADPHX = (6S)-NADPHX. Its function is as follows. Catalyzes the epimerization of the S- and R-forms of NAD(P)HX, a damaged form of NAD(P)H that is a result of enzymatic or heat-dependent hydration. This is a prerequisite for the S-specific NAD(P)H-hydrate dehydratase to allow the repair of both epimers of NAD(P)HX. Accelerates cholesterol efflux from endothelial cells to high-density lipoprotein (HDL) and thereby regulates angiogenesis. The protein is NAD(P)H-hydrate epimerase of Homo sapiens (Human).